Reading from the N-terminus, the 1317-residue chain is ABC transporter C family member 14 (1317 aa).

The ABC transmembrane type-1 1 domain occupies Asn-119 to Gly-404. A run of 5 helical transmembrane segments spans residues Ile-127–Ile-147, Ser-156–Ile-176, Ile-249–Gly-269, Val-341–Ser-361, and Leu-375–Leu-395. Residues Glu-426–Asp-451 form a disordered region. The span at Asn-427–Asn-449 shows a compositional bias: low complexity. One can recognise an ABC transporter 1 domain in the interval Glu-490–Ile-710. Gly-522–Thr-529 is an ATP binding site. Helical transmembrane passes span Tyr-734 to Gly-754, Asp-778 to Ile-798, Leu-871 to Ile-891, Leu-969 to Ser-989, and Gly-992 to Val-1012. An ABC transmembrane type-1 2 domain is found at Leu-744–Arg-1027. The region spanning Ile-1071–Lys-1306 is the ABC transporter 2 domain. Position 1105-1112 (Gly-1105–Thr-1112) interacts with ATP.

The protein belongs to the ABC transporter superfamily. ABCC family. Conjugate transporter (TC 3.A.1.208) subfamily.

It localises to the membrane. The sequence is that of ABC transporter C family member 14 (abcC14) from Dictyostelium discoideum (Social amoeba).